A 464-amino-acid polypeptide reads, in one-letter code: Glutamate--tRNA ligase (464 aa).

The 'HIGH' region signature appears at 8–18 (PSPTGYMHLGN). Zn(2+)-binding residues include Cys96, Cys98, Cys123, and His125. The 'KMSKS' region signature appears at 240-244 (KLSKR). Residue Lys243 coordinates ATP.

The protein belongs to the class-I aminoacyl-tRNA synthetase family. Glutamate--tRNA ligase type 1 subfamily. Monomer. Zn(2+) serves as cofactor.

It is found in the cytoplasm. The enzyme catalyses tRNA(Glu) + L-glutamate + ATP = L-glutamyl-tRNA(Glu) + AMP + diphosphate. Functionally, catalyzes the attachment of glutamate to tRNA(Glu) in a two-step reaction: glutamate is first activated by ATP to form Glu-AMP and then transferred to the acceptor end of tRNA(Glu). This Hydrogenobaculum sp. (strain Y04AAS1) protein is Glutamate--tRNA ligase.